The chain runs to 119 residues: Beta-2-microglobulin (119 aa).

Residues 1–20 form the signal peptide; sequence MARSVVVALLVLLSLSGLEA. Positions 25 to 114 constitute an Ig-like C1-type domain; that stretch reads PKIQVYSRHP…VTFSTPKTVK (90 aa). A disulfide bond links Cys45 and Cys100.

The protein belongs to the beta-2-microglobulin family. Heterodimer of an alpha chain and a beta chain. Beta-2-microglobulin is the beta-chain of major histocompatibility complex class I molecules.

The protein localises to the secreted. Component of the class I major histocompatibility complex (MHC). Involved in the presentation of peptide antigens to the immune system. The chain is Beta-2-microglobulin (B2M) from Ateles paniscus (Black spider monkey).